Consider the following 575-residue polypeptide: Putative export ATP-binding/permease protein RBE_0492 (575 aa).

Residues 20–303 (LIIVIISLLS…IFELLSEMHL (284 aa)) enclose the ABC transmembrane type-1 domain. A run of 6 helical transmembrane segments spans residues 21–41 (IIVIISLLSVSLALLLIGNVF), 61–81 (ILYICLLIIILSIASFFRSYF), 135–155 (FLSFFIRNSVMLVGSIILMFF), 158–178 (FKLASIVIITIPLLLIPIIKF), 242–262 (ALFFAFSMAFIFLGVTLVIWI), and 277–297 (IISFIYYAIIAGFSSGGIFEL). The ABC transporter domain occupies 336 to 571 (LEFKNVNFSY…SDLYRTIYKE (236 aa)). Residue 371–378 (GRSGSGKS) coordinates ATP.

It belongs to the ABC transporter superfamily. As to quaternary structure, homodimer.

It localises to the cell inner membrane. Part of an ABC transporter complex. Transmembrane domains (TMD) form a pore in the inner membrane and the ATP-binding domain (NBD) is responsible for energy generation. The protein is Putative export ATP-binding/permease protein RBE_0492 of Rickettsia bellii (strain RML369-C).